Here is a 254-residue protein sequence, read N- to C-terminus: Hydroxyacylglutathione hydrolase (254 aa).

Positions 53, 55, 57, 58, 111, 128, and 166 each coordinate Zn(2+).

This sequence belongs to the metallo-beta-lactamase superfamily. Glyoxalase II family. In terms of assembly, monomer. The cofactor is Zn(2+).

The catalysed reaction is an S-(2-hydroxyacyl)glutathione + H2O = a 2-hydroxy carboxylate + glutathione + H(+). The protein operates within secondary metabolite metabolism; methylglyoxal degradation; (R)-lactate from methylglyoxal: step 2/2. Its function is as follows. Thiolesterase that catalyzes the hydrolysis of S-D-lactoyl-glutathione to form glutathione and D-lactic acid. This chain is Hydroxyacylglutathione hydrolase, found in Aeromonas hydrophila subsp. hydrophila (strain ATCC 7966 / DSM 30187 / BCRC 13018 / CCUG 14551 / JCM 1027 / KCTC 2358 / NCIMB 9240 / NCTC 8049).